Here is a 119-residue protein sequence, read N- to C-terminus: NADH-quinone oxidoreductase subunit A (119 aa).

A run of 3 helical transmembrane segments spans residues 9–29, 63–83, and 88–108; these read IFLF…LGYI, LVAI…PWAV, and IGAL…VGFI.

This sequence belongs to the complex I subunit 3 family. In terms of assembly, NDH-1 is composed of 14 different subunits. Subunits NuoA, H, J, K, L, M, N constitute the membrane sector of the complex.

The protein localises to the cell inner membrane. It carries out the reaction a quinone + NADH + 5 H(+)(in) = a quinol + NAD(+) + 4 H(+)(out). NDH-1 shuttles electrons from NADH, via FMN and iron-sulfur (Fe-S) centers, to quinones in the respiratory chain. The immediate electron acceptor for the enzyme in this species is believed to be ubiquinone. Couples the redox reaction to proton translocation (for every two electrons transferred, four hydrogen ions are translocated across the cytoplasmic membrane), and thus conserves the redox energy in a proton gradient. This chain is NADH-quinone oxidoreductase subunit A, found in Albidiferax ferrireducens (strain ATCC BAA-621 / DSM 15236 / T118) (Rhodoferax ferrireducens).